Here is a 137-residue protein sequence, read N- to C-terminus: MNTEMYQTPMEVAVYQLHNFSISFFSSLLGGDVVSVKLDNSASGASVVALDNKIEQAMDLVKNHLMYAVREEVEVLKEQIRELLEKNSQLERENTLLKTLASPEQLEKFQSRLSPEEPAPEAPETPETPEAPGGSAV.

Residues 1–60 form an AP1-binding region; the sequence is MNTEMYQTPMEVAVYQLHNFSISFFSSLLGGDVVSVKLDNSASGASVVALDNKIEQAMDL. Asn-40 and Val-73 each carry phosphoserine. Residues 76 to 97 are leucine-zipper; the sequence is LKEQIRELLEKNSQLERENTLL. The tract at residues 101–137 is disordered; sequence ASPEQLEKFQSRLSPEEPAPEAPETPETPEAPGGSAV. Position 102 is a phosphoserine (Ser-102). Phosphothreonine is present on residues Thr-125 and Thr-128. The span at 128–137 shows a compositional bias: low complexity; it reads TPEAPGGSAV.

The protein belongs to the TSC-22/Dip/Bun family. Can form homodimers, however it is likely to function as a monomer. Interacts with NFKB1. Interacts (via N-terminus) with JUN and FOS; these interactions inhibit the binding of active AP1 to its target DNA. In terms of assembly, interacts with MYOD1. Interacts with HDAC1; this interaction affects HDAC1 activity on MYOG promoter and thus inhibits MYOD1 transcriptional activity. As to quaternary structure, interacts with MYOD1. Expressed in T-cells. Expression inversely correlates with T-cell activation, being higher in resting cells and lower in cells activated by TCR/CD3 triggering (at protein level). Constitutively expressed in lung, intestine, kidney and liver, most probably by resident cells from the macrophage lineage. Expressed in thymus, lymph nodes, bone marrow, spleen, lung and skeletal muscle. As to expression, expressed in spleen and skeletal muscle (at protein level). Expressed in the cortex, medulla and papilla of the kidney. In terms of tissue distribution, expressed in the cortex, medulla and papilla of the kidney. Expressed in spleen and skeletal muscle (at protein level).

It localises to the cytoplasm. It is found in the nucleus. In terms of biological role, protects T-cells from IL2 deprivation-induced apoptosis through the inhibition of FOXO3A transcriptional activity that leads to the down-regulation of the pro-apoptotic factor BCL2L11. In macrophages, plays a role in the anti-inflammatory and immunosuppressive effects of glucocorticoids and IL10. In T-cells, inhibits anti-CD3-induced NFKB1 nuclear translocation and thereby NFKB1 DNA-binding activities. In vitro, suppresses AP-1 transcription factor complex DNA-binding activities. Functionally, inhibits myogenic differentiation and mediates anti-myogenic effects of glucocorticoids by binding and regulating MYOD1 and HDAC1 transcriptional activity resulting in reduced expression of MYOG. This is TSC22 domain family protein 3 from Mus musculus (Mouse).